We begin with the raw amino-acid sequence, 936 residues long: Protocadherin gamma-A10 (936 aa).

The N-terminal stretch at 1 to 32 (MAAQRNRSKESKDCSGLVLLCLFFGIPWEAGA) is a signal peptide. 6 Cadherin domains span residues 33–137 (RQIS…APTF), 138–246 (QAEN…APVF), 247–351 (TLPE…SPEL), 352–456 (TITS…PPTF), 457–566 (SQVS…APEI), and 574–687 (DGST…SPAN). Residues 33–696 (RQISYSIPEE…NSETSDLTLY (664 aa)) are Extracellular-facing. N51 carries N-linked (GlcNAc...) asparagine glycosylation. N-linked (GlcNAc...) asparagine glycosylation is found at N423 and N549. The chain crosses the membrane as a helical span at residues 697 to 717 (LVVAVAAVSCVFLAFVIVLLA). The Cytoplasmic portion of the chain corresponds to 718 to 936 (LRLRRWHKSR…KKKSGKKEKK (219 aa)). 2 disordered regions span residues 801 to 845 (SKFP…WPNN) and 906 to 936 (ATLT…KEKK). Polar residues predominate over residues 820 to 845 (WRFSQAQRPGTSGSQNGDDTGTWPNN). Positions 926-936 (NKKKSGKKEKK) are enriched in basic residues.

The protein localises to the cell membrane. Functionally, potential calcium-dependent cell-adhesion protein. May be involved in the establishment and maintenance of specific neuronal connections in the brain. This is Protocadherin gamma-A10 (PCDHGA10) from Pan troglodytes (Chimpanzee).